Reading from the N-terminus, the 453-residue chain is MREGSHLIVLPFPGQGHITPMSQFCKRLASKGLKLTLVLVSDKPSPPYKTEHDSITVFPISNGFQEGEEPLQDLDDYMERVETSIKNTLPKLVEDMKLSGNPPRAIVYDSTMPWLLDVAHSYGLSGAVFFTQPWLVTAIYYHVFKGSFSVPSTKYGHSTLASFPSFPMLTANDLPSFLCESSSYPNILRIVVDQLSNIDRVDIVLCNTFDKLEEKLLKWVQSLWPVLNIGPTVPSMYLDKRLSEDKNYGFSLFNAKVAECMEWLNSKEPNSVVYLSFGSLVILKEDQMLELAAGLKQSGRFFLWVVRETETHKLPRNYVEEIGEKGLIVSWSPQLDVLAHKSIGCFLTHCGWNSTLEGLSLGVPMIGMPHWTDQPTNAKFMQDVWKVGVRVKAEGDGFVRREEIMRSVEEVMEGEKGKEIRKNAEKWKVLAQEAVSEGGSSDKSINEFVSMFC.

Residue H17 is the Proton acceptor of the active site. H17 contacts an anthocyanidin. D109 serves as the catalytic Charge relay. UDP-alpha-D-glucose is bound by residues T131, Q334, H349, W352, N353, S354, E357, D373, and Q374.

It belongs to the UDP-glycosyltransferase family. In terms of tissue distribution, expressed in roots, cotyledons and leaf hydathodes.

It catalyses the reaction (indol-3-yl)butanoate + UDP-alpha-D-glucose = 4-(indol-3-yl)butanoyl-beta-D-glucose + UDP. Its function is as follows. Glucosyltransferase that acts on the auxin indole-3-butyric acid (IBA). Mediates abiotic stress responses and stress-induced morphological adaptations by regulating auxin homeostasis. Possesses low activity in vitro on jasmonate (JA) and the synthetic auxin analog naphthaleneacetic acid (NAA). This is UDP-glycosyltransferase 74E2 (UGT74E2) from Arabidopsis thaliana (Mouse-ear cress).